The following is a 300-amino-acid chain: Probable mitochondrial 2-oxodicarboxylate carrier (300 aa).

The segment at 1-20 is disordered; sequence MTSKGNAGNPPTPTPAPVKS. Solcar repeat units lie at residues 21-104, 114-200, and 209-295; these read QPLW…YEKQ, PTQM…IKSA, and GVLV…VMKL. 6 helical membrane-spanning segments follow: residues 27-47, 74-93, 120-140, 171-191, 209-229, and 278-298; these read LVSG…LDVV, LKMY…KRAI, IGSG…FELV, GFFK…GGYF, GVLV…TMLN, and LGPG…LLAG.

Belongs to the mitochondrial carrier (TC 2.A.29) family.

Its subcellular location is the mitochondrion inner membrane. It carries out the reaction 2-oxoadipate(in) + 2-oxoglutarate(out) = 2-oxoadipate(out) + 2-oxoglutarate(in). The enzyme catalyses hexanedioate(in) + 2-oxoglutarate(out) = hexanedioate(out) + 2-oxoglutarate(in). It catalyses the reaction L-2-aminoadipate(in) + 2-oxoglutarate(out) = L-2-aminoadipate(out) + 2-oxoglutarate(in). The catalysed reaction is glutarate(in) + 2-oxoglutarate(out) = glutarate(out) + 2-oxoglutarate(in). It carries out the reaction 2-oxoheptanedioate(in) + 2-oxoglutarate(out) = 2-oxoheptanedioate(out) + 2-oxoglutarate(in). The enzyme catalyses heptanedioate(in) + 2-oxoglutarate(out) = heptanedioate(out) + 2-oxoglutarate(in). It catalyses the reaction citrate(in) + 2-oxoglutarate(out) = citrate(out) + 2-oxoglutarate(in). Transports dicarboxylates across the inner membranes of mitochondria by a counter-exchange mechanism. Can transport 2-oxoadipate (2-oxohexanedioate), 2-oxoglutarate, adipate (hexanedioate), glutarate, and to a lesser extent, pimelate (heptanedioate), 2-oxopimelate (2-oxoheptanedioate), 2-aminoadipate (2-aminohexanedioate), oxaloacetate, and citrate. Plays a central role in catabolism of lysine, hydroxylysine, and tryptophan, by transporting common metabolite intermediates (such as 2-oxoadipate) into the mitochondria, where it is converted into acetyl-CoA and can enter the citric acid (TCA) cycle. This Dictyostelium discoideum (Social amoeba) protein is Probable mitochondrial 2-oxodicarboxylate carrier (mcfT).